Consider the following 400-residue polypeptide: Elongation factor Tu (400 aa).

Residues 10–210 (KPHCNVGTIG…VDSYIPIPPR (201 aa)) enclose the tr-type G domain. Residues 19–26 (GHVDHGKT) are G1. 19-26 (GHVDHGKT) provides a ligand contact to GTP. Threonine 26 provides a ligand contact to Mg(2+). The interval 60–64 (GLTIA) is G2. Positions 81–84 (DCPG) are G3. GTP contacts are provided by residues 81 to 85 (DCPGH) and 136 to 139 (NKCD). Residues 136 to 139 (NKCD) form a G4 region. The segment at 174 to 176 (SAI) is G5.

This sequence belongs to the TRAFAC class translation factor GTPase superfamily. Classic translation factor GTPase family. EF-Tu/EF-1A subfamily. In terms of assembly, monomer.

The protein resides in the cytoplasm. The catalysed reaction is GTP + H2O = GDP + phosphate + H(+). GTP hydrolase that promotes the GTP-dependent binding of aminoacyl-tRNA to the A-site of ribosomes during protein biosynthesis. The chain is Elongation factor Tu from Dehalococcoides mccartyi (strain ATCC BAA-2266 / KCTC 15142 / 195) (Dehalococcoides ethenogenes (strain 195)).